The sequence spans 416 residues: Homogentisate 1,2-dioxygenase (416 aa).

H275 functions as the Proton acceptor in the catalytic mechanism. Fe cation-binding residues include H318 and E324. Homogentisate is bound by residues Y333 and H354. H354 serves as a coordination point for Fe cation.

It belongs to the homogentisate dioxygenase family. Hexamer; dimer of trimers. Requires Fe cation as cofactor.

The catalysed reaction is homogentisate + O2 = 4-maleylacetoacetate + H(+). It functions in the pathway amino-acid degradation; L-phenylalanine degradation; acetoacetate and fumarate from L-phenylalanine: step 4/6. In terms of biological role, involved in the catabolism of homogentisate (2,5-dihydroxyphenylacetate or 2,5-OH-PhAc), a central intermediate in the degradation of phenylalanine and tyrosine. Catalyzes the oxidative ring cleavage of the aromatic ring of homogentisate to yield maleylacetoacetate. The polypeptide is Homogentisate 1,2-dioxygenase (Legionella pneumophila (strain Corby)).